A 466-amino-acid polypeptide reads, in one-letter code: F-box/LRR-repeat protein fbxl-1 (466 aa).

The region spanning 54 to 100 (SLINRVLPKEVLLKVFSFLDTKALCRSAQVCRSWSILALDGSNWQRV) is the F-box domain. 11 LRR repeats span residues 122-147 (GGFL…FTSR), 148-173 (CPNL…LGRY), 174-199 (CHKL…IGDG), 200-225 (CPNL…ILSN), 226-251 (CKSL…VEAH), 252-277 (MGAI…IANG), 278-303 (ATAL…LGQH), 304-329 (SHNL…LARG), 330-355 (CRQL…LANN), 356-381 (CTAL…LASK), and 408-433 (CKAL…FQHH).

Component of the SCF (SKP1-CUL1-F-box protein)-type E3 ubiquitin ligase complex. As to expression, expressed in neuroglial cells such as the socket cell and sheath cell, neurosecretory motor neurons and regions around the pharynx and anus.

It is found in the perikaryon. The protein localises to the cell projection. The protein resides in the dendrite. Its subcellular location is the cilium. It localises to the axon. Substrate-recognition component of the SCF (SKP1-CUL1-F-box protein)-type E3 ubiquitin ligase complex. Plays a role in regulating the entry into the dauer state. In hermaphrodites, may play a role in modulating the rate of defecation. The polypeptide is F-box/LRR-repeat protein fbxl-1 (Caenorhabditis elegans).